A 156-amino-acid polypeptide reads, in one-letter code: FAD synthase (156 aa).

ATP-binding positions include 9 to 10 (TF), 14 to 17 (HPGH), asparagine 92, and histidine 119.

Belongs to the archaeal FAD synthase family. As to quaternary structure, homodimer. The cofactor is a divalent metal cation.

It catalyses the reaction FMN + ATP + H(+) = FAD + diphosphate. It functions in the pathway cofactor biosynthesis; FAD biosynthesis; FAD from FMN: step 1/1. Functionally, catalyzes the transfer of the AMP portion of ATP to flavin mononucleotide (FMN) to produce flavin adenine dinucleotide (FAD) coenzyme. This chain is FAD synthase, found in Methanospirillum hungatei JF-1 (strain ATCC 27890 / DSM 864 / NBRC 100397 / JF-1).